Consider the following 125-residue polypeptide: Protein ApaG (125 aa).

In terms of domain architecture, ApaG spans 1-125; it reads MADSPRVCVQ…FRLAVPTLIH (125 aa).

In Cronobacter sakazakii (strain ATCC BAA-894) (Enterobacter sakazakii), this protein is Protein ApaG.